A 450-amino-acid polypeptide reads, in one-letter code: Vacuolar cation/proton exchanger 1c (450 aa).

Topologically, residues 1-73 (MAPPESSHHH…LLGGPAAQLQ (73 aa)) are cytoplasmic. Residues 28–52 (AAEEEEKKEAAAWTPSSSSSMTGRK) are disordered. The helical transmembrane segment at 74 to 94 (EVLLGTKLYPLFSAVPLAVAA) threads the bilayer. The Extracellular portion of the chain corresponds to 95-101 (ESLRLGR). The chain crosses the membrane as a helical span at residues 102–122 (VWVFAFSLIGLAPLAERVSFL). Residues 123 to 134 (SEHIANTVGPTA) are Cytoplasmic-facing. Residues 135–155 (GGIMNATCGNVPELIIALFAL) traverse the membrane as a helical segment. The interval 143–178 (GNVPELIIALFALHKNKMEILKWSLLGSILSNLLLV) is cation selection. Over 156–170 (HKNKMEILKWSLLGS) the chain is Extracellular. A helical membrane pass occupies residues 171-191 (ILSNLLLVLGSSLLFGGIVNI). Residues 192–201 (GKERPLDKRQ) are Cytoplasmic-facing. The helical transmembrane segment at 202-222 (ADVSIGLLLLGVLCHIATLVS) threads the bilayer. Over 223 to 239 (KYTSSTGDSINSSSVMQ) the chain is Extracellular. A helical transmembrane segment spans residues 240-260 (LSRSCAIVMLIAYFGSLMFQL). Over 261 to 287 (KTHRQIFELEEDSSDSSSSEDDATDKS) the chain is Cytoplasmic. A helical membrane pass occupies residues 288–308 (VIGFASAMVWLIGMAVVTAML). Residues 309–331 (SSYVVTTIEEASESMGIPVRFIS) lie on the Extracellular side of the membrane. The helical transmembrane segment at 332 to 352 (IILLPIVGNAAEHAGAIIFAF) threads the bilayer. The segment at 339–374 (GNAAEHAGAIIFAFKNKIDISLGITLGSATQISMLV) is cation selection. Over 353 to 360 (KNKIDISL) the chain is Cytoplasmic. Residues 361 to 381 (GITLGSATQISMLVVPVILIV) traverse the membrane as a helical segment. The Extracellular portion of the chain corresponds to 382–385 (SWVN). A helical membrane pass occupies residues 386 to 406 (AIPMDLDFNLLETGSLAMAVI). Over 407–424 (TTAFTLQDDKWHYLKGLN) the chain is Cytoplasmic. The helical transmembrane segment at 425-445 (LVFSYIVIAVCFFVMKALPTL) threads the bilayer. Residues 446–450 (KKEDD) are Extracellular-facing.

This sequence belongs to the Ca(2+):cation antiporter (CaCA) (TC 2.A.19) family. Cation/proton exchanger (CAX) subfamily. Expressed in leaf blades.

Its subcellular location is the vacuole membrane. Its function is as follows. Vacuolar cation/proton exchanger (CAX). Translocates Ca(2+) and other metal ions into vacuoles using the proton gradient formed by H(+)-ATPase and H(+)-pyrophosphatase. This is Vacuolar cation/proton exchanger 1c (CAX1c) from Oryza sativa subsp. japonica (Rice).